Reading from the N-terminus, the 207-residue chain is MPSLLISVLFLHIAIYIINTIGASTIDSLLWLIYTKLPTSASCMAREQHQMKLEVVQLKREMNATSSQDEFAKWAKLRRRHDKALEEYEVKNKQFSRFKSLFDVAVKALRWAGTSGLILLLQFWFSKTPIFTLPPSWIPWQVEWVLSFPRAPMGTVSIQVWGGACAVMVALVGEAIGATVRYLYGSKDSMEAIKVGAGAVEKEKKRQ.

The Lumenal portion of the chain corresponds to 1–4; sequence MPSL. A helical transmembrane segment spans residues 5–24; that stretch reads LISVLFLHIAIYIINTIGAS. At 25 to 110 the chain is on the cytoplasmic side; that stretch reads TIDSLLWLIY…LFDVAVKALR (86 aa). The stretch at 44–97 forms a coiled coil; sequence MAREQHQMKLEVVQLKREMNATSSQDEFAKWAKLRRRHDKALEEYEVKNKQFSR. Residues 111 to 131 form a helical membrane-spanning segment; sequence WAGTSGLILLLQFWFSKTPIF. At 132–155 the chain is on the lumenal side; that stretch reads TLPPSWIPWQVEWVLSFPRAPMGT. Residues 156 to 172 traverse the membrane as a helical segment; the sequence is VSIQVWGGACAVMVALV. Over 173 to 207 the chain is Cytoplasmic; sequence GEAIGATVRYLYGSKDSMEAIKVGAGAVEKEKKRQ.

This sequence belongs to the WRB/GET1 family. In terms of assembly, interacts with GET3.

It is found in the endoplasmic reticulum membrane. Its function is as follows. Required for the post-translational delivery of tail-anchored (TA) proteins to the endoplasmic reticulum. Acts as a membrane receptor for soluble GET3, which recognizes and selectively binds the transmembrane domain of TA proteins in the cytosol. The sequence is that of Protein GET1 from Paracoccidioides lutzii (strain ATCC MYA-826 / Pb01) (Paracoccidioides brasiliensis).